Consider the following 308-residue polypeptide: F420-non-reducing hydrogenase subunit G (308 aa).

Belongs to the [NiFe]/[NiFeSe] hydrogenase small subunit family. In terms of assembly, the F420-non-reducing hydrogenase is composed of three subunits; MvhA, MvhD and MvhG. It forms a complex with the heterodisulfide reductase (hdr).

Part of a complex that provides reducing equivalents for heterodisulfide reductase. In Methanothermobacter marburgensis (strain ATCC BAA-927 / DSM 2133 / JCM 14651 / NBRC 100331 / OCM 82 / Marburg) (Methanobacterium thermoautotrophicum), this protein is F420-non-reducing hydrogenase subunit G (mvhG).